Consider the following 417-residue polypeptide: NADH-quinone oxidoreductase subunit D (417 aa).

The protein belongs to the complex I 49 kDa subunit family. In terms of assembly, NDH-1 is composed of 14 different subunits. Subunits NuoB, C, D, E, F, and G constitute the peripheral sector of the complex.

The protein localises to the cell inner membrane. It catalyses the reaction a quinone + NADH + 5 H(+)(in) = a quinol + NAD(+) + 4 H(+)(out). In terms of biological role, NDH-1 shuttles electrons from NADH, via FMN and iron-sulfur (Fe-S) centers, to quinones in the respiratory chain. The immediate electron acceptor for the enzyme in this species is believed to be ubiquinone. Couples the redox reaction to proton translocation (for every two electrons transferred, four hydrogen ions are translocated across the cytoplasmic membrane), and thus conserves the redox energy in a proton gradient. The sequence is that of NADH-quinone oxidoreductase subunit D from Legionella pneumophila (strain Corby).